Consider the following 205-residue polypeptide: Thymidine kinase (205 aa).

ATP contacts are provided by residues 9–16 (SAMNAGKS) and 87–90 (DECQ). Glutamate 88 (proton acceptor) is an active-site residue. Positions 145, 147, 182, and 185 each coordinate Zn(2+).

It belongs to the thymidine kinase family. Homotetramer.

The protein resides in the cytoplasm. It carries out the reaction thymidine + ATP = dTMP + ADP + H(+). With respect to regulation, allosteric enzyme which is feedback inhibited by dTTP and activated by a number of dNDP and dNTP. Functionally, phosphorylates both thymidine and deoxyuridine. The protein is Thymidine kinase of Escherichia coli O157:H7.